Reading from the N-terminus, the 166-residue chain is Large ribosomal subunit protein uL10 (166 aa).

This sequence belongs to the universal ribosomal protein uL10 family. As to quaternary structure, part of the ribosomal stalk of the 50S ribosomal subunit. The N-terminus interacts with L11 and the large rRNA to form the base of the stalk. The C-terminus forms an elongated spine to which L12 dimers bind in a sequential fashion forming a multimeric L10(L12)X complex.

Forms part of the ribosomal stalk, playing a central role in the interaction of the ribosome with GTP-bound translation factors. The polypeptide is Large ribosomal subunit protein uL10 (Marinomonas sp. (strain MWYL1)).